The following is a 601-amino-acid chain: Probable Xaa-Pro aminopeptidase P (601 aa).

Mn(2+)-binding residues include Asp-398, Asp-409, Glu-507, and Glu-521.

The protein belongs to the peptidase M24B family. The cofactor is Mn(2+).

It catalyses the reaction Release of any N-terminal amino acid, including proline, that is linked to proline, even from a dipeptide or tripeptide.. Its function is as follows. Catalyzes the removal of a penultimate prolyl residue from the N-termini of peptides. The polypeptide is Probable Xaa-Pro aminopeptidase P (ampp) (Sclerotinia sclerotiorum (strain ATCC 18683 / 1980 / Ss-1) (White mold)).